We begin with the raw amino-acid sequence, 981 residues long: Probable NAD kinase 2, chloroplastic (981 aa).

The calmodulin-binding stretch occupies residues Ala319–Arg364. Disordered stretches follow at residues Ala369–Met413 and Thr551–Asn601. Polar residues-rich tracts occupy residues Thr387 to Pro406, Thr551 to Ser563, and Ser581 to Lys596.

This sequence belongs to the NAD kinase family.

It localises to the plastid. It is found in the chloroplast. It carries out the reaction NAD(+) + ATP = ADP + NADP(+) + H(+). In terms of biological role, involved in chlorophyll synthesis and chloroplast protection against oxidative damage. This Oryza sativa subsp. japonica (Rice) protein is Probable NAD kinase 2, chloroplastic.